A 183-amino-acid polypeptide reads, in one-letter code: Nucleoside triphosphate pyrophosphatase (183 aa).

D71 acts as the Proton acceptor in catalysis.

The protein belongs to the Maf family. A divalent metal cation is required as a cofactor.

It localises to the cytoplasm. The catalysed reaction is a ribonucleoside 5'-triphosphate + H2O = a ribonucleoside 5'-phosphate + diphosphate + H(+). The enzyme catalyses a 2'-deoxyribonucleoside 5'-triphosphate + H2O = a 2'-deoxyribonucleoside 5'-phosphate + diphosphate + H(+). In terms of biological role, nucleoside triphosphate pyrophosphatase. May have a dual role in cell division arrest and in preventing the incorporation of modified nucleotides into cellular nucleic acids. In Campylobacter jejuni subsp. jejuni serotype O:6 (strain 81116 / NCTC 11828), this protein is Nucleoside triphosphate pyrophosphatase.